Reading from the N-terminus, the 250-residue chain is NAD(P)H-hydrate epimerase (250 aa).

In terms of domain architecture, YjeF N-terminal spans 14-238 (AAALDVELMS…SIAEKYGIQK (225 aa)). Position 74-78 (74-78 (NNGGD)) interacts with (6S)-NADPHX. The K(+) site is built by Asn-75 and Asp-143. (6S)-NADPHX-binding positions include 147–154 (GFSFHGTA), Tyr-159, and Asp-180. Ser-183 is a binding site for K(+).

It belongs to the NnrE/AIBP family. Requires K(+) as cofactor.

The enzyme catalyses (6R)-NADHX = (6S)-NADHX. The catalysed reaction is (6R)-NADPHX = (6S)-NADPHX. Its function is as follows. Catalyzes the epimerization of the S- and R-forms of NAD(P)HX, a damaged form of NAD(P)H that is a result of enzymatic or heat-dependent hydration. This is a prerequisite for the S-specific NAD(P)H-hydrate dehydratase to allow the repair of both epimers of NAD(P)HX. This Thalassiosira pseudonana (Marine diatom) protein is NAD(P)H-hydrate epimerase.